Consider the following 173-residue polypeptide: Large ribosomal RNA subunit accumulation protein YceD (173 aa).

This sequence belongs to the DUF177 domain family.

In terms of biological role, plays a role in synthesis, processing and/or stability of 23S rRNA. The chain is Large ribosomal RNA subunit accumulation protein YceD (yceD) from Escherichia coli O157:H7.